Reading from the N-terminus, the 641-residue chain is Bifunctional protein glk (641 aa).

A glucokinase region spans residues 1–340 (MSTGAQTKAA…QLSNRTGGAS (340 aa)). 23 to 28 (ADVGGT) serves as a coordination point for ATP. One can recognise an HTH rpiR-type domain in the interval 341–417 (SAVFERIRQM…LKLATGLTGT (77 aa)). Residues 341–641 (SAVFERIRQM…SHGAAPAAKD (301 aa)) form a putative HTH-type transcriptional regulator region. Residues 377–396 (IVNIARKADVSQPTVIRFCR) constitute a DNA-binding region (H-T-H motif). The SIS domain maps to 461–600 (AIDILNNARR…AVGVAIRRAA (140 aa)). The chain crosses the membrane as a helical span at residues 576–596 (SMISRILHLVMIDILAVGVAI).

It in the N-terminal section; belongs to the bacterial glucokinase family.

Its subcellular location is the membrane. The enzyme catalyses D-glucose + ATP = D-glucose 6-phosphate + ADP + H(+). In Burkholderia mallei (strain ATCC 23344), this protein is Bifunctional protein glk (glk).